The chain runs to 651 residues: Acid beta-fructofuranosidase (651 aa).

Topologically, residues 1–23 (MEHHKPLLPTSSHAAPNPRTRKD) are cytoplasmic. Positions 1 to 103 (MEHHKPLLPT…LFSGEGGASE (103 aa)) are cleaved as a propeptide — removed in mature form. The chain crosses the membrane as a helical; Signal-anchor for type II membrane protein span at residues 24–44 (LLLLLCALLFLSSLVAFGRNR). Topologically, residues 45–651 (ASNVPHDHVS…PFPFNPDQKN (607 aa)) are lumenal. A disordered region spans residues 48–76 (VPHDHVSSSASNHQQEHQSPTSLPSSKWH). Polar residues predominate over residues 54–72 (SSSASNHQQEHQSPTSLPS). Residues 127 to 130 (WMND), glutamine 146, tryptophan 154, and 189 to 190 (WT) each bind substrate. The active site involves aspartate 130. The N-linked (GlcNAc...) asparagine glycan is linked to asparagine 210. A substrate-binding site is contributed by 253 to 254 (RD). Asparagine 275 is a glycosylation site (N-linked (GlcNAc...) asparagine). Glutamate 308 and aspartate 343 together coordinate substrate. An intrachain disulfide couples cysteine 500 to cysteine 548. The N-linked (GlcNAc...) asparagine glycan is linked to asparagine 620.

The protein belongs to the glycosyl hydrolase 32 family. May be present in two forms, a 70 kDa monomer and a heterodimer of the 30 kDa and 38 kDa subunits. The ratio of the levels of the two forms within cells appears to be regulated developmentally.

Its subcellular location is the membrane. The protein resides in the vacuole lumen. It carries out the reaction Hydrolysis of terminal non-reducing beta-D-fructofuranoside residues in beta-D-fructofuranosides.. The protein operates within glycan biosynthesis; sucrose metabolism. The chain is Acid beta-fructofuranosidase from Phaseolus vulgaris (Kidney bean).